The primary structure comprises 234 residues: Small ribosomal subunit protein uS3 (234 aa).

One can recognise a KH type-2 domain in the interval 39 to 107; the sequence is VRDYLKKKLS…PVHVNIEEVR (69 aa). The segment at 212 to 234 is disordered; sequence EQPAAAEQEKRGKKSGVKHAAAS.

It belongs to the universal ribosomal protein uS3 family. In terms of assembly, part of the 30S ribosomal subunit. Forms a tight complex with proteins S10 and S14.

Its function is as follows. Binds the lower part of the 30S subunit head. Binds mRNA in the 70S ribosome, positioning it for translation. This chain is Small ribosomal subunit protein uS3, found in Thiobacillus denitrificans (strain ATCC 25259 / T1).